The primary structure comprises 276 residues: Diaminopimelate epimerase (276 aa).

3 residues coordinate substrate: asparagine 13, glutamine 46, and asparagine 66. Catalysis depends on cysteine 75, which acts as the Proton donor. Substrate is bound by residues 76 to 77 (GN), asparagine 159, asparagine 192, and 210 to 211 (ER). Cysteine 219 acts as the Proton acceptor in catalysis. Position 220 to 221 (220 to 221 (GT)) interacts with substrate.

This sequence belongs to the diaminopimelate epimerase family. Homodimer.

It is found in the cytoplasm. The catalysed reaction is (2S,6S)-2,6-diaminopimelate = meso-2,6-diaminopimelate. The protein operates within amino-acid biosynthesis; L-lysine biosynthesis via DAP pathway; DL-2,6-diaminopimelate from LL-2,6-diaminopimelate: step 1/1. Catalyzes the stereoinversion of LL-2,6-diaminopimelate (L,L-DAP) to meso-diaminopimelate (meso-DAP), a precursor of L-lysine and an essential component of the bacterial peptidoglycan. The chain is Diaminopimelate epimerase from Pseudomonas savastanoi pv. phaseolicola (strain 1448A / Race 6) (Pseudomonas syringae pv. phaseolicola (strain 1448A / Race 6)).